Consider the following 316-residue polypeptide: 4-hydroxy-3-methylbut-2-enyl diphosphate reductase (316 aa).

Cys-12 contributes to the [4Fe-4S] cluster binding site. 2 residues coordinate (2E)-4-hydroxy-3-methylbut-2-enyl diphosphate: His-43 and His-81. Residues His-43 and His-81 each contribute to the dimethylallyl diphosphate site. Residues His-43 and His-81 each contribute to the isopentenyl diphosphate site. Cys-103 lines the [4Fe-4S] cluster pocket. His-131 contributes to the (2E)-4-hydroxy-3-methylbut-2-enyl diphosphate binding site. A dimethylallyl diphosphate-binding site is contributed by His-131. His-131 lines the isopentenyl diphosphate pocket. Catalysis depends on Glu-133, which acts as the Proton donor. (2E)-4-hydroxy-3-methylbut-2-enyl diphosphate is bound at residue Thr-170. Position 198 (Cys-198) interacts with [4Fe-4S] cluster. Positions 226, 228, and 271 each coordinate (2E)-4-hydroxy-3-methylbut-2-enyl diphosphate. The dimethylallyl diphosphate site is built by Ser-226, Asn-228, and Ser-271. Residues Ser-226, Asn-228, and Ser-271 each contribute to the isopentenyl diphosphate site.

Belongs to the IspH family. Requires [4Fe-4S] cluster as cofactor.

The enzyme catalyses isopentenyl diphosphate + 2 oxidized [2Fe-2S]-[ferredoxin] + H2O = (2E)-4-hydroxy-3-methylbut-2-enyl diphosphate + 2 reduced [2Fe-2S]-[ferredoxin] + 2 H(+). It catalyses the reaction dimethylallyl diphosphate + 2 oxidized [2Fe-2S]-[ferredoxin] + H2O = (2E)-4-hydroxy-3-methylbut-2-enyl diphosphate + 2 reduced [2Fe-2S]-[ferredoxin] + 2 H(+). Its pathway is isoprenoid biosynthesis; dimethylallyl diphosphate biosynthesis; dimethylallyl diphosphate from (2E)-4-hydroxy-3-methylbutenyl diphosphate: step 1/1. It functions in the pathway isoprenoid biosynthesis; isopentenyl diphosphate biosynthesis via DXP pathway; isopentenyl diphosphate from 1-deoxy-D-xylulose 5-phosphate: step 6/6. Catalyzes the conversion of 1-hydroxy-2-methyl-2-(E)-butenyl 4-diphosphate (HMBPP) into a mixture of isopentenyl diphosphate (IPP) and dimethylallyl diphosphate (DMAPP). Acts in the terminal step of the DOXP/MEP pathway for isoprenoid precursor biosynthesis. In Geobacillus kaustophilus (strain HTA426), this protein is 4-hydroxy-3-methylbut-2-enyl diphosphate reductase.